A 176-amino-acid polypeptide reads, in one-letter code: Peptide deformylase (176 aa).

Residues cysteine 100 and histidine 142 each contribute to the Fe cation site. Residue glutamate 143 is part of the active site. Residue histidine 146 coordinates Fe cation.

This sequence belongs to the polypeptide deformylase family. The cofactor is Fe(2+).

The enzyme catalyses N-terminal N-formyl-L-methionyl-[peptide] + H2O = N-terminal L-methionyl-[peptide] + formate. In terms of biological role, removes the formyl group from the N-terminal Met of newly synthesized proteins. Requires at least a dipeptide for an efficient rate of reaction. N-terminal L-methionine is a prerequisite for activity but the enzyme has broad specificity at other positions. The sequence is that of Peptide deformylase from Elusimicrobium minutum (strain Pei191).